A 166-amino-acid chain; its full sequence is Interferon gamma (166 aa).

The first 23 residues, 1–23 (MNYTSYILAFQLCVILGSSGCYC), serve as a signal peptide directing secretion. Gln-24 carries the pyrrolidone carboxylic acid modification. N-linked (GlcNAc...) asparagine glycans are attached at residues Asn-39 and Asn-106. The segment at 147-166 (SNLRKRKRRQNQIQGRRASK) is disordered.

The protein belongs to the type II (or gamma) interferon family. As to quaternary structure, homodimer. Interacts with IFNGR1 (via extracellular domain); this interaction promotes IFNGR1 dimerization. As to expression, released primarily from activated T lymphocytes.

It localises to the secreted. Its function is as follows. Type II interferon produced by immune cells such as T-cells and NK cells that plays crucial roles in antimicrobial, antiviral, and antitumor responses by activating effector immune cells and enhancing antigen presentation. Primarily signals through the JAK-STAT pathway after interaction with its receptor IFNGR1 to affect gene regulation. Upon IFNG binding, IFNGR1 intracellular domain opens out to allow association of downstream signaling components JAK2, JAK1 and STAT1, leading to STAT1 activation, nuclear translocation and transcription of IFNG-regulated genes. Many of the induced genes are transcription factors such as IRF1 that are able to further drive regulation of a next wave of transcription. Plays a role in class I antigen presentation pathway by inducing a replacement of catalytic proteasome subunits with immunoproteasome subunits. In turn, increases the quantity, quality, and repertoire of peptides for class I MHC loading. Increases the efficiency of peptide generation also by inducing the expression of activator PA28 that associates with the proteasome and alters its proteolytic cleavage preference. Up-regulates as well MHC II complexes on the cell surface by promoting expression of several key molecules such as cathepsins B/CTSB, H/CTSH, and L/CTSL. Participates in the regulation of hematopoietic stem cells during development and under homeostatic conditions by affecting their development, quiescence, and differentiation. The polypeptide is Interferon gamma (IFNG) (Lama glama (Llama)).